Consider the following 687-residue polypeptide: Adhesion G-protein coupled receptor G1 (687 aa).

Positions M1–S25 are cleaved as a signal peptide. G26–R33 lines the heparin pocket. The Extracellular portion of the chain corresponds to G26–Y402. Cystine bridges form between C35-C91 and C121-C177. N-linked (GlcNAc...) asparagine glycosylation is found at N39, N148, and N171. L190–P200 contributes to the heparin binding site. The 172-residue stretch at D224–V395 folds into the GAIN-B domain. Residues N234, N303, N324, and N341 are each glycosylated (N-linked (GlcNAc...) asparagine). 2 disulfide bridges follow: C346–C377 and C366–C379. A GPS region spans residues C346–V395. Positions Y384–A397 are stachel. A helical transmembrane segment spans residues L403–A423. Residues A424 to N442 are Cytoplasmic-facing. A helical membrane pass occupies residues L443–T463. The Extracellular segment spans residues G464–T471. Residues S472 to Y492 form a helical membrane-spanning segment. Topologically, residues N493–K512 are cytoplasmic. A helical membrane pass occupies residues L513–V533. Residues N534–G570 lie on the Extracellular side of the membrane. A helical transmembrane segment spans residues L571–L591. Residues R592 to V603 lie on the Cytoplasmic side of the membrane. The helical transmembrane segment at L604–F624 threads the bilayer. Over A625–Q630 the chain is Extracellular. Residues L631–W651 form a helical membrane-spanning segment. Residues Y652 to I687 are Cytoplasmic-facing. Positions S664–I687 are disordered. Low complexity predominate over residues S678–I687.

This sequence belongs to the G-protein coupled receptor 2 family. LN-TM7 subfamily. In terms of assembly, heterodimer of 2 chains generated by proteolytic processing; the large extracellular N-terminal fragment (ADGRG1 NT) and the membrane-bound C-terminal fragment (ADGRG1-CT) predominantly remain associated and non-covalently linked. ADGRG1 NT self-associates in a trans-trans manner; the homophilic interaction enhances receptor signaling. Interacts with TGM2. Interacts with heparin; leading to the reduction of ADGRG1 shedding. Interacts with COL3A1. Part of a GPCR-tetraspanin complex at least consisting of ADGRG1, CD81, eventually CD9, and GNA11 in which CD81 is enhancing the association of ADGRG1 with GNA11. Autoproteolytically cleaved into 2 fragments; the large extracellular N-terminal fragment and the membroune-bound C-terminal fragment predominantly remain associated and non-covalently linked. Post-translationally, N-glycosylated. The secreted ADGRG1 N-terminal fragment is heavily glycosylated. In terms of processing, ubiquitinated. Undergoes polyubiquitination upon activation. In terms of tissue distribution, expressed in neural progenitor cells in fetal forbrain. Expressed in migrating neurons. Expressed in radial glial endfeet (at protein level). Expressed in peritubular myoid cells, Sertoli cells, and germ cells of the testis.

Its subcellular location is the cell membrane. The protein localises to the secreted. It is found in the membrane raft. Forms a heterodimer of 2 chains generated by proteolytic processing that remain associated through non-covalent interactions mediated by the GAIN-B domain. In the inactivated receptor, the Stachel sequence (also named stalk) is embedded in the GAIN-B domain, where it adopts a beta-strand conformation. On activation, the Stachel moves into the 7 transmembrane region and adopts a twisted hook-shaped configuration that forms contacts within the receptor, leading to coupling of a G-alpha protein, which activates signaling. The cleaved GAIN-B and N-terminal domains can then dissociate from the rest of the receptor. Activated by the small-molecule agonist, 3-alpha-acetoxydihydrodeoxygedunin (3-alpha-DOG). In terms of biological role, adhesion G-protein coupled receptor (aGPCR) for steroid hormone 17alpha-hydroxypregnenolone (17-OH), which is involved in cell adhesion and cell-cell interactions. Ligand binding causes a conformation change that triggers signaling via guanine nucleotide-binding proteins (G proteins) and modulates the activity of downstream effectors, such as RhoA pathway. ADGRG1 is coupled to G(12) and/or G(13) G proteins (GNA12 and GNA13, respectively) and mediates the activation Rho small GTPases. Acts as a potent suppressor of ferroptosis: binding to 17-OH-binding initiates signaling that down-regulates CD36 and alleviates ferroptosis-induced liver injury. Ligand-binding also induces cell adhesion activity via association with proteins such as collagen III/COL3A1 and TGM2. Mediates cell matrix adhesion in developing neurons and hematopoietic stem cells. Involved in cortical development, specifically in maintenance of the pial basement membrane integrity and in cortical lamination: association with COL3A1 in the developing brain inhibits neuronal migration via activation of the RhoA pathway. Together with TGM2, acts as a regulator of myelination and myelin repair in oligodendrocyte precursor cells. Acts as a hemostatic sensor of shear force: G protein-coupled receptor signaling is activated in response to shear force in platelets, promoting G(13) G protein signaling, and platelet shape change and aggregation in a COL3A1-dependent manner. Acts as an inhibitor of VEGFA production thereby inhibiting angiogenesis through a signaling pathway mediated by PRKCA. Plays a role in the maintenance of hematopoietic stem cells in bone marrow niche. Plays an essential role in testis development. Adhesion G-protein coupled receptor (aGPCR) for phosphatidylserine, which is involved in microglia-mediated synapse pruning during development. Required to maintain appropriate synaptic numbers in several brain regions in a time- and circuit-dependent fashion: phosphatidylserine-binding acts as a 'eat-me' signal for apoptotic cells, leading to microglial engulfment of phosphatidylserine-positive synapses. The sequence is that of Adhesion G-protein coupled receptor G1 from Mus musculus (Mouse).